Consider the following 143-residue polypeptide: MKTYHQKPSEVQRDWYVIDASGKVLGRLATQISTLLRGKHKPTFTPSIDGGDFVIVVNAEKIVLTGRKPEQKIYYRHSGYPGGLKEIPYKMMLAKHPERILRLAVKRMLPKNRMGRRLLSKLRIYAGPNHPHAAQQPKPYIPR.

Belongs to the universal ribosomal protein uL13 family. Part of the 50S ribosomal subunit.

This protein is one of the early assembly proteins of the 50S ribosomal subunit, although it is not seen to bind rRNA by itself. It is important during the early stages of 50S assembly. The chain is Large ribosomal subunit protein uL13 from Chloroflexus aggregans (strain MD-66 / DSM 9485).